The following is a 1179-amino-acid chain: Protein turtle homolog A (1179 aa).

The signal sequence occupies residues 1–20 (MVWCLGLAVLSLVISQGADG). Residues 21–734 (RGKPEVVSVV…TQLPGLLPQP (714 aa)) are Extracellular-facing. 5 consecutive Ig-like domains span residues 24-124 (PEVV…DFAN), 136-216 (PQFQ…GSAT), 226-318 (PPVI…AYLT), 322-410 (PAQV…SPVT), and 418-502 (PAFI…TNVY). 5 disulfides stabilise this stretch: C41–C108, C158–C206, C248–C301, C344–C395, and C440–C486. 2 N-linked (GlcNAc...) asparagine glycosylation sites follow: N188 and N256. 2 consecutive Fibronectin type-III domains span residues 507-611 (SPHV…TTPA) and 623-718 (PLSP…TSGL). N-linked (GlcNAc...) asparagine glycans are attached at residues N513 and N524. A disordered region spans residues 606-626 (LPTTPAAPGLPPTEIPPPLSP). A compositionally biased stretch (pro residues) spans 613–626 (PGLPPTEIPPPLSP). A helical membrane pass occupies residues 735-755 (VLAGVVGGVCFLGVAVLVSIL). The Cytoplasmic portion of the chain corresponds to 756 to 1179 (AGCLLNRRRA…VPHPEQATLL (424 aa)). Disordered stretches follow at residues 767–919 (RRRR…PLPG), 940–988 (DWPP…VVGA), and 1015–1079 (AAPR…KRRN). Positions 785-800 (GKSAAPSALGSGSPDS) are enriched in low complexity. At S809 the chain carries Phosphoserine. Pro residues-rich tracts occupy residues 826–836 (TPSPHPDPPSS) and 906–919 (VAPPPAAPPSPLPG). T972 carries the post-translational modification Phosphothreonine. Residues 1177–1179 (TLL) carry the PDZ-binding motif.

This sequence belongs to the immunoglobulin superfamily. Turtle family. As to quaternary structure, interacts with MAGI2 and SHANK1.

It is found in the cell membrane. The protein resides in the synapse. Functions in dendrite outgrowth and synapse maturation. The protein is Protein turtle homolog A (IGSF9) of Homo sapiens (Human).